The primary structure comprises 498 residues: ATP synthase subunit beta, chloroplastic (498 aa).

172-179 (GGAGVGKT) lines the ATP pocket.

This sequence belongs to the ATPase alpha/beta chains family. As to quaternary structure, F-type ATPases have 2 components, CF(1) - the catalytic core - and CF(0) - the membrane proton channel. CF(1) has five subunits: alpha(3), beta(3), gamma(1), delta(1), epsilon(1). CF(0) has four main subunits: a(1), b(1), b'(1) and c(9-12).

It is found in the plastid. The protein resides in the chloroplast thylakoid membrane. The enzyme catalyses ATP + H2O + 4 H(+)(in) = ADP + phosphate + 5 H(+)(out). In terms of biological role, produces ATP from ADP in the presence of a proton gradient across the membrane. The catalytic sites are hosted primarily by the beta subunits. This is ATP synthase subunit beta, chloroplastic from Aspidistra elatior (Cast-iron plant).